An 83-amino-acid polypeptide reads, in one-letter code: NAD(P)H-quinone oxidoreductase subunit L (83 aa).

Transmembrane regions (helical) follow at residues Leu-15 to Leu-35 and Leu-53 to Leu-73.

It belongs to the complex I NdhL subunit family. NDH-1 can be composed of about 15 different subunits; different subcomplexes with different compositions have been identified which probably have different functions.

It localises to the cellular thylakoid membrane. The catalysed reaction is a plastoquinone + NADH + (n+1) H(+)(in) = a plastoquinol + NAD(+) + n H(+)(out). The enzyme catalyses a plastoquinone + NADPH + (n+1) H(+)(in) = a plastoquinol + NADP(+) + n H(+)(out). Its function is as follows. NDH-1 shuttles electrons from an unknown electron donor, via FMN and iron-sulfur (Fe-S) centers, to quinones in the respiratory and/or the photosynthetic chain. The immediate electron acceptor for the enzyme in this species is believed to be plastoquinone. Couples the redox reaction to proton translocation, and thus conserves the redox energy in a proton gradient. Cyanobacterial NDH-1 also plays a role in inorganic carbon-concentration. The polypeptide is NAD(P)H-quinone oxidoreductase subunit L (Prochlorococcus marinus (strain MIT 9303)).